Here is a 231-residue protein sequence, read N- to C-terminus: Thiamine import ATP-binding protein ThiQ (231 aa).

The 229-residue stretch at 2-230 (LHLDRLLIRQ…PPPALRAYLG (229 aa)) folds into the ABC transporter domain. Residue 32-39 (GPSGGGKS) coordinates ATP.

Belongs to the ABC transporter superfamily. Thiamine importer (TC 3.A.1.19.1) family. In terms of assembly, the complex is composed of two ATP-binding proteins (ThiQ), two transmembrane proteins (ThiP) and a solute-binding protein (ThiB).

It is found in the cell inner membrane. It carries out the reaction thiamine(out) + ATP + H2O = thiamine(in) + ADP + phosphate + H(+). Its function is as follows. Part of the ABC transporter complex ThiBPQ involved in thiamine import. Responsible for energy coupling to the transport system. The sequence is that of Thiamine import ATP-binding protein ThiQ from Cereibacter sphaeroides (strain ATCC 17023 / DSM 158 / JCM 6121 / CCUG 31486 / LMG 2827 / NBRC 12203 / NCIMB 8253 / ATH 2.4.1.) (Rhodobacter sphaeroides).